The following is a 395-amino-acid chain: MKRKQQEDDNDDGVEKAVSPVLATTSNTMSTDLLLQSSSKLSQKQDYIFHGGRRHVRPYYFEFISHVNKRWTGKTIVDLFADEFKGRPRDYYVGAVKSGRIKVDGEIVPVSYIVKSSQKITHFLHRHEPPVMIDDVVILHQEPDVVTVCKPASVPVHPCGQYRKNTIVGILDAEHDLGTLFPIHRLDRLVSGLLIIARTAAKADFFRQQIEGGMVKKRYIAKVIGVFPEDEMIVDANINYNGSEGRSTAEDANSSGDDKKVKGKPACTKFTRIDTNGTHSLVSCEPVTGRTHQIRVHLQYTGHPIANDPLYLNQHIDNLETYIAKRIDAGERKIVSPDDYVYSSEDFSIDPMCTNCPKLIPQGYEEHDEALWLHCVQYCGTGWEYECPYPSWASL.

The disordered stretch occupies residues 1 to 21; the sequence is MKRKQQEDDNDDGVEKAVSPV. An S4 RNA-binding domain is found at 74 to 136; that stretch reads KTIVDLFADE…HEPPVMIDDV (63 aa). Residue Asp-187 is part of the active site. Residues 244–255 are compositionally biased toward polar residues; the sequence is EGRSTAEDANSS. The tract at residues 244 to 263 is disordered; the sequence is EGRSTAEDANSSGDDKKVKG.

This sequence belongs to the pseudouridine synthase RluA family.

The catalysed reaction is a uridine in RNA = a pseudouridine in RNA. This chain is RNA pseudouridine synthase 7, found in Arabidopsis thaliana (Mouse-ear cress).